A 489-amino-acid chain; its full sequence is Aklavinone 12-hydroxylase DnrF (489 aa).

FAD-binding positions include 17–18, Glu-37, Gln-121, and Leu-145; that span reads LG. The Proton acceptor role is filled by Tyr-224. Residue Asp-308 participates in FAD binding. Aklavinone is bound at residue Gly-317. The tract at residues 402–428 is disordered; it reads VAAEDDDPEPTEDPRRPSGRPGFRAPH.

This sequence belongs to the PheA/TfdB FAD monooxygenase family. Monomer. FAD serves as cofactor.

The enzyme catalyses aklavinone + NADPH + O2 + H(+) = epsilon-rhodomycinone + NADP(+) + H2O. The protein operates within antibiotic biosynthesis; daunorubicin biosynthesis. It participates in antibiotic biosynthesis; carminomycin biosynthesis. Its pathway is antibiotic biosynthesis; rhodomycin biosynthesis. It functions in the pathway antibiotic biosynthesis; doxorubicin biosynthesis. Its function is as follows. Involved in the biosynthesis of the anthracyclines carminomycin, rhodomycin, daunorubicin (daunomycin) and doxorubicin (adriamycin) which are aromatic polyketide antibiotics that exhibit high cytotoxicity and are widely applied in the chemotherapy of a variety of cancers. Catalyzes the incorporation of a hydroxyl group at position C-11 of aklavinone, resulting in epsilon-rhodomycinone. This chain is Aklavinone 12-hydroxylase DnrF (dnrF), found in Streptomyces peucetius subsp. caesius.